The sequence spans 132 residues: NADPH-dependent 7-cyano-7-deazaguanine reductase (132 aa).

The Thioimide intermediate role is filled by C43. D50 functions as the Proton donor in the catalytic mechanism. Substrate contacts are provided by residues 65–67 (VEL) and 84–85 (HE).

This sequence belongs to the GTP cyclohydrolase I family. QueF type 1 subfamily.

It is found in the cytoplasm. The enzyme catalyses 7-aminomethyl-7-carbaguanine + 2 NADP(+) = 7-cyano-7-deazaguanine + 2 NADPH + 3 H(+). It functions in the pathway tRNA modification; tRNA-queuosine biosynthesis. Functionally, catalyzes the NADPH-dependent reduction of 7-cyano-7-deazaguanine (preQ0) to 7-aminomethyl-7-deazaguanine (preQ1). This is NADPH-dependent 7-cyano-7-deazaguanine reductase from Thermosynechococcus vestitus (strain NIES-2133 / IAM M-273 / BP-1).